Consider the following 252-residue polypeptide: Phosphoribosylaminoimidazole-succinocarboxamide synthase 1 (252 aa).

This sequence belongs to the SAICAR synthetase family.

The enzyme catalyses 5-amino-1-(5-phospho-D-ribosyl)imidazole-4-carboxylate + L-aspartate + ATP = (2S)-2-[5-amino-1-(5-phospho-beta-D-ribosyl)imidazole-4-carboxamido]succinate + ADP + phosphate + 2 H(+). It participates in purine metabolism; IMP biosynthesis via de novo pathway; 5-amino-1-(5-phospho-D-ribosyl)imidazole-4-carboxamide from 5-amino-1-(5-phospho-D-ribosyl)imidazole-4-carboxylate: step 1/2. This chain is Phosphoribosylaminoimidazole-succinocarboxamide synthase 1 (purC1), found in Caulobacter vibrioides (strain ATCC 19089 / CIP 103742 / CB 15) (Caulobacter crescentus).